Reading from the N-terminus, the 251-residue chain is Ubiquinone/menaquinone biosynthesis C-methyltransferase UbiE (251 aa).

Residues Thr-74, Asp-95, 123-124 (NA), and Ser-140 contribute to the S-adenosyl-L-methionine site.

It belongs to the class I-like SAM-binding methyltransferase superfamily. MenG/UbiE family.

It carries out the reaction a 2-demethylmenaquinol + S-adenosyl-L-methionine = a menaquinol + S-adenosyl-L-homocysteine + H(+). The enzyme catalyses a 2-methoxy-6-(all-trans-polyprenyl)benzene-1,4-diol + S-adenosyl-L-methionine = a 5-methoxy-2-methyl-3-(all-trans-polyprenyl)benzene-1,4-diol + S-adenosyl-L-homocysteine + H(+). The protein operates within quinol/quinone metabolism; menaquinone biosynthesis; menaquinol from 1,4-dihydroxy-2-naphthoate: step 2/2. Its pathway is cofactor biosynthesis; ubiquinone biosynthesis. Methyltransferase required for the conversion of demethylmenaquinol (DMKH2) to menaquinol (MKH2) and the conversion of 2-polyprenyl-6-methoxy-1,4-benzoquinol (DDMQH2) to 2-polyprenyl-3-methyl-6-methoxy-1,4-benzoquinol (DMQH2). In Salmonella paratyphi A (strain AKU_12601), this protein is Ubiquinone/menaquinone biosynthesis C-methyltransferase UbiE.